Here is a 162-residue protein sequence, read N- to C-terminus: Cyanate hydratase (162 aa).

Catalysis depends on residues arginine 103, glutamate 106, and serine 129.

The protein belongs to the cyanase family.

It catalyses the reaction cyanate + hydrogencarbonate + 3 H(+) = NH4(+) + 2 CO2. Catalyzes the reaction of cyanate with bicarbonate to produce ammonia and carbon dioxide. The sequence is that of Cyanate hydratase from Phaeosphaeria nodorum (strain SN15 / ATCC MYA-4574 / FGSC 10173) (Glume blotch fungus).